We begin with the raw amino-acid sequence, 374 residues long: Bifunctional enzyme IspD/IspF (374 aa).

Residues Met1 to Phe213 form a 2-C-methyl-D-erythritol 4-phosphate cytidylyltransferase region. Residues Phe214 to Arg374 form a 2-C-methyl-D-erythritol 2,4-cyclodiphosphate synthase region. A divalent metal cation is bound by residues Asp220 and His222. 4-CDP-2-C-methyl-D-erythritol 2-phosphate contacts are provided by residues Asp220 to His222 and His246 to Ser247. Position 254 (His254) interacts with a divalent metal cation. Residues Asp268–Gly270, Phe273–Asp277, Thr344–Glu347, Phe351, and Arg354 contribute to the 4-CDP-2-C-methyl-D-erythritol 2-phosphate site.

In the N-terminal section; belongs to the IspD/TarI cytidylyltransferase family. IspD subfamily. This sequence in the C-terminal section; belongs to the IspF family. A divalent metal cation is required as a cofactor.

The enzyme catalyses 2-C-methyl-D-erythritol 4-phosphate + CTP + H(+) = 4-CDP-2-C-methyl-D-erythritol + diphosphate. It catalyses the reaction 4-CDP-2-C-methyl-D-erythritol 2-phosphate = 2-C-methyl-D-erythritol 2,4-cyclic diphosphate + CMP. It participates in isoprenoid biosynthesis; isopentenyl diphosphate biosynthesis via DXP pathway; isopentenyl diphosphate from 1-deoxy-D-xylulose 5-phosphate: step 2/6. Its pathway is isoprenoid biosynthesis; isopentenyl diphosphate biosynthesis via DXP pathway; isopentenyl diphosphate from 1-deoxy-D-xylulose 5-phosphate: step 4/6. Its function is as follows. Bifunctional enzyme that catalyzes the formation of 4-diphosphocytidyl-2-C-methyl-D-erythritol from CTP and 2-C-methyl-D-erythritol 4-phosphate (MEP) (IspD), and catalyzes the conversion of 4-diphosphocytidyl-2-C-methyl-D-erythritol 2-phosphate (CDP-ME2P) to 2-C-methyl-D-erythritol 2,4-cyclodiphosphate (ME-CPP) with a corresponding release of cytidine 5-monophosphate (CMP) (IspF). The protein is Bifunctional enzyme IspD/IspF of Aliarcobacter butzleri (strain RM4018) (Arcobacter butzleri).